Reading from the N-terminus, the 1128-residue chain is Nck-associated protein 1 (1128 aa).

Residue Ser-2 is modified to N-acetylserine. Residues 640–665 are disordered; the sequence is AVNKKSKKQTGKKGEPEREKPGVESM. Positions 651 to 665 are enriched in basic and acidic residues; the sequence is KKGEPEREKPGVESM. Residues 995-1015 traverse the membrane as a helical segment; that stretch reads IACLLMVFVAVSLPTLASNVM.

It belongs to the HEM-1/HEM-2 family. Component of the WAVE1 complex composed of ABI2, CYFIP1 or CYFIP2, BRK1, NCKAP1 and WASF1/WAVE1. Within the complex, a heterodimer containing NCKAP1 and CYFIP1 interacts with a heterotrimer formed by WAVE1, ABI2 and BRK1. Component of the WAVE2 complex composed of ABI1, CYFIP1/SRA1, NCKAP1/NAP1 and WASF2/WAVE2. CYFIP2 binds to activated RAC1 which causes the complex to dissociate, releasing activated WASF1. The complex can also be activated by NCK1. Associates preferentially with the first SH3 domain of NCK. Interacts with NYAP1, NYAP2 and MYO16. Interacts with TMEM132D. In terms of assembly, (Microbial infection) Interacts with human cytomegalovirus protein UL135. Expressed in all tissues examined except peripheral blood leukocytes, with highest expression in brain, heart, and skeletal muscle. Expressed in cells of various brain regions including Purkinje cells and dentate nucleus of the cerebellum, CA4 region and dentate gyrus of the hippocampus, and in frontal gray and white matter.

Its subcellular location is the cell membrane. The protein resides in the cell projection. It localises to the lamellipodium membrane. Functionally, part of the WAVE complex that regulates lamellipodia formation. The WAVE complex regulates actin filament reorganization via its interaction with the Arp2/3 complex. Actin remodeling activity is regulated by RAC1. As component of the WAVE1 complex, required for BDNF-NTRK2 endocytic trafficking and signaling from early endosomes. This chain is Nck-associated protein 1 (NCKAP1), found in Homo sapiens (Human).